The chain runs to 253 residues: UPF0246 protein Swit_4565 (253 aa).

This sequence belongs to the UPF0246 family.

In Rhizorhabdus wittichii (strain DSM 6014 / CCUG 31198 / JCM 15750 / NBRC 105917 / EY 4224 / RW1) (Sphingomonas wittichii), this protein is UPF0246 protein Swit_4565.